The following is a 137-amino-acid chain: Dormancy-associated protein homolog 3 (137 aa).

Disordered regions lie at residues 1–55 (MGLL…DSLP) and 69–137 (KPPG…TYGM). A compositionally biased stretch (polar residues) spans 32-43 (FRPSSGNDQSEA). Over residues 70-87 (PPGYQGSSAPASPAGSTP) the composition is skewed to low complexity. S81 bears the Phosphoserine mark. Residues 88 to 97 (PLSPFSPPLS) show a composition bias toward pro residues. Basic and acidic residues predominate over residues 104 to 118 (EPFRFRRRSTSDAFE). Polar residues predominate over residues 127 to 137 (GPRSSPPTYGM).

It belongs to the DRM1/ARP family.

This chain is Dormancy-associated protein homolog 3, found in Arabidopsis thaliana (Mouse-ear cress).